The following is a 196-amino-acid chain: Imidazole glycerol phosphate synthase subunit HisH (196 aa).

The Glutamine amidotransferase type-1 domain maps to 2–196 (KATLINYGVG…LRNFYSWVKR (195 aa)). The active-site Nucleophile is Cys76. Active-site residues include His175 and Glu177.

As to quaternary structure, heterodimer of HisH and HisF.

It is found in the cytoplasm. It carries out the reaction 5-[(5-phospho-1-deoxy-D-ribulos-1-ylimino)methylamino]-1-(5-phospho-beta-D-ribosyl)imidazole-4-carboxamide + L-glutamine = D-erythro-1-(imidazol-4-yl)glycerol 3-phosphate + 5-amino-1-(5-phospho-beta-D-ribosyl)imidazole-4-carboxamide + L-glutamate + H(+). The enzyme catalyses L-glutamine + H2O = L-glutamate + NH4(+). It participates in amino-acid biosynthesis; L-histidine biosynthesis; L-histidine from 5-phospho-alpha-D-ribose 1-diphosphate: step 5/9. Functionally, IGPS catalyzes the conversion of PRFAR and glutamine to IGP, AICAR and glutamate. The HisH subunit catalyzes the hydrolysis of glutamine to glutamate and ammonia as part of the synthesis of IGP and AICAR. The resulting ammonia molecule is channeled to the active site of HisF. This chain is Imidazole glycerol phosphate synthase subunit HisH, found in Sulfurisphaera tokodaii (strain DSM 16993 / JCM 10545 / NBRC 100140 / 7) (Sulfolobus tokodaii).